A 126-amino-acid polypeptide reads, in one-letter code: Small ribosomal subunit protein uS11 (126 aa).

This sequence belongs to the universal ribosomal protein uS11 family. In terms of assembly, part of the 30S ribosomal subunit.

Functionally, located on the platform of the 30S subunit. In Methanosarcina mazei (strain ATCC BAA-159 / DSM 3647 / Goe1 / Go1 / JCM 11833 / OCM 88) (Methanosarcina frisia), this protein is Small ribosomal subunit protein uS11.